The primary structure comprises 1296 residues: DNA-directed RNA polymerase subunit beta' (1296 aa).

Zn(2+) is bound by residues Cys-60, Cys-62, Cys-75, and Cys-78. The Mg(2+) site is built by Asp-535, Asp-537, and Asp-539. Residues Cys-877, Cys-954, Cys-961, and Cys-964 each contribute to the Zn(2+) site.

It belongs to the RNA polymerase beta' chain family. As to quaternary structure, the RNAP catalytic core consists of 2 alpha, 1 beta, 1 beta' and 1 omega subunit. When a sigma factor is associated with the core the holoenzyme is formed, which can initiate transcription. Requires Mg(2+) as cofactor. Zn(2+) is required as a cofactor.

The catalysed reaction is RNA(n) + a ribonucleoside 5'-triphosphate = RNA(n+1) + diphosphate. Its function is as follows. DNA-dependent RNA polymerase catalyzes the transcription of DNA into RNA using the four ribonucleoside triphosphates as substrates. The sequence is that of DNA-directed RNA polymerase subunit beta' from Beutenbergia cavernae (strain ATCC BAA-8 / DSM 12333 / CCUG 43141 / JCM 11478 / NBRC 16432 / NCIMB 13614 / HKI 0122).